Reading from the N-terminus, the 202-residue chain is dITP/XTP pyrophosphatase (202 aa).

10–15 is a substrate binding site; sequence TSNRHK. The active-site Proton acceptor is the aspartate 70. Aspartate 70 contacts Mg(2+). Substrate-binding positions include serine 71, 153-156, lysine 176, and 181-182; these read FGYD and HR.

It belongs to the HAM1 NTPase family. As to quaternary structure, homodimer. Mg(2+) is required as a cofactor.

The catalysed reaction is XTP + H2O = XMP + diphosphate + H(+). It catalyses the reaction dITP + H2O = dIMP + diphosphate + H(+). It carries out the reaction ITP + H2O = IMP + diphosphate + H(+). In terms of biological role, pyrophosphatase that catalyzes the hydrolysis of nucleoside triphosphates to their monophosphate derivatives, with a high preference for the non-canonical purine nucleotides XTP (xanthosine triphosphate), dITP (deoxyinosine triphosphate) and ITP. Seems to function as a house-cleaning enzyme that removes non-canonical purine nucleotides from the nucleotide pool, thus preventing their incorporation into DNA/RNA and avoiding chromosomal lesions. This chain is dITP/XTP pyrophosphatase, found in Methylacidiphilum infernorum (isolate V4) (Methylokorus infernorum (strain V4)).